We begin with the raw amino-acid sequence, 468 residues long: Glutamine synthetase (468 aa).

In terms of domain architecture, GS beta-grasp spans 14 to 98 (HDVKYVDLRF…ILCDVYEPST (85 aa)). The 363-residue stretch at 106 to 468 (PRGIAKAAEK…PIEYKMYYSV (363 aa)) folds into the GS catalytic domain. Mg(2+) contacts are provided by Glu-131 and Glu-133. Glu-209 contributes to the ATP binding site. Glu-214 and Glu-221 together coordinate Mg(2+). Residues 265 to 266 (NG) and Gly-266 each bind L-glutamate. His-270 is a binding site for Mg(2+). ATP contacts are provided by residues 272-274 (HQS) and Ser-274. L-glutamate contacts are provided by Arg-322, Glu-328, and Arg-340. Residues Arg-340, Arg-345, and Lys-353 each contribute to the ATP site. Glu-358 contributes to the Mg(2+) binding site. Arg-360 contacts L-glutamate. Tyr-398 is subject to O-AMP-tyrosine.

This sequence belongs to the glutamine synthetase family. Oligomer of 12 subunits arranged in the form of two hexameric ring. Requires Mg(2+) as cofactor.

The protein localises to the cytoplasm. The enzyme catalyses L-glutamate + NH4(+) + ATP = L-glutamine + ADP + phosphate + H(+). Its activity is regulated as follows. The activity of this enzyme could be controlled by adenylation under conditions of abundant glutamine. Its function is as follows. Catalyzes the ATP-dependent biosynthesis of glutamine from glutamate and ammonia. The sequence is that of Glutamine synthetase from Azospirillum brasilense.